The primary structure comprises 398 residues: Elongation factor Tu (398 aa).

The tr-type G domain occupies 10–207; that stretch reads KPHVNIGTIG…TVDDYIPDPE (198 aa). Residues 19–26 form a G1 region; the sequence is GHVDHGKT. 19-26 lines the GTP pocket; that stretch reads GHVDHGKT. Position 26 (T26) interacts with Mg(2+). The G2 stretch occupies residues 63–67; sequence GITIN. The G3 stretch occupies residues 84-87; sequence DAPG. GTP is bound by residues 84 to 88 and 139 to 142; these read DAPGH and NKVD. A G4 region spans residues 139–142; sequence NKVD. Residues 177 to 179 are G5; that stretch reads SAL.

The protein belongs to the TRAFAC class translation factor GTPase superfamily. Classic translation factor GTPase family. EF-Tu/EF-1A subfamily. As to quaternary structure, monomer.

The protein localises to the cytoplasm. The enzyme catalyses GTP + H2O = GDP + phosphate + H(+). Functionally, GTP hydrolase that promotes the GTP-dependent binding of aminoacyl-tRNA to the A-site of ribosomes during protein biosynthesis. The protein is Elongation factor Tu of Streptococcus mutans serotype c (strain ATCC 700610 / UA159).